The sequence spans 479 residues: Poly(A) polymerase catalytic subunit (479 aa).

Residues aspartate 202 and aspartate 204 contribute to the active site. Residues aspartate 202, aspartate 204, and aspartate 253 each coordinate Ca(2+).

Belongs to the poxviridae poly(A) polymerase catalytic subunit family. Heterodimer of a large (catalytic) subunit and a small (regulatory) subunit.

It catalyses the reaction RNA(n) + ATP = RNA(n)-3'-adenine ribonucleotide + diphosphate. Polymerase that creates the 3'-poly(A) tail of mRNA's. The protein is Poly(A) polymerase catalytic subunit (OPG063) of Mus musculus (Mouse).